We begin with the raw amino-acid sequence, 248 residues long: 2,3-dihydro-2,3-dihydroxybenzoate dehydrogenase (248 aa).

9 to 33 contacts NAD(+); that stretch reads WVTGAGKGIGYATALAFVEAGAKVT. Substrate is bound at residue serine 131. Tyrosine 144 serves as the catalytic Proton acceptor.

Belongs to the short-chain dehydrogenases/reductases (SDR) family. In terms of assembly, homotetramer; dimer of dimers. EntA and EntE interact together.

The catalysed reaction is (2S,3S)-2,3-dihydroxy-2,3-dihydrobenzoate + NAD(+) = 2,3-dihydroxybenzoate + NADH + H(+). It functions in the pathway siderophore biosynthesis; enterobactin biosynthesis. With respect to regulation, inhibited by cis-2-hydroxy-3-cyclohexen-1-carboxylate, cis-2-hydroxycyclohexane-1-carboxylate and trans-2-hydroxycyclohexane-1-carboxylate. Its function is as follows. Involved in the biosynthesis of the siderophore enterobactin (enterochelin), which is a macrocyclic trimeric lactone of N-(2,3-dihydroxybenzoyl)-serine. Catalyzes the reversible NAD-dependent oxidation of the C3-hydroxyl group of 2,3-dihydro-2,3-dihydroxybenzoate (2,3-diDHB), producing the transient intermediate 2-hydroxy-3-oxo-4,6-cyclohexadiene-1-carboxylate, which undergoes rapid aromatization to the final product, 2,3-dihydroxybenzoate (2,3-DHB). Only the compounds with a C3-hydroxyl group such as methyl 2,3-dihydro-2,3-dihydroxybenzoate, methyl-3-hydroxy-1,4-cyclohexadiene-1-carboxylate, trans-3-hydroxy-2-cyclohexene-1-carboxylate, cis-3-hydroxy-4-cyclohexene-1-carboxylate, cis-3-hydroxycyclohexane-1-carboxylic acid are oxidized to the corresponding ketone products. The stereospecificity of the C3 allylic alcohol group oxidation is 3R in a 1R,3R dihydro substrate. It can also increase the DHB-AMP ligase activity of EntE by interaction EntE. The chain is 2,3-dihydro-2,3-dihydroxybenzoate dehydrogenase from Escherichia coli (strain K12).